Consider the following 158-residue polypeptide: MTADTEPVTIGALTRADAQRCAELEAQLFVGDDPWPPAAFNRELASPHNHYVGARSGGTLVGYAGISRLGRTPPFEYEVHTIGVDPAYQGRGIGRRLLRELLDFARGGVVYLEVRTDNDAALALYRSVGFQRVGLRRRYYRVSGADAYTMRRDSGDPS.

Residues 8 to 155 enclose the N-acetyltransferase domain; sequence VTIGALTRAD…DAYTMRRDSG (148 aa).

It belongs to the acetyltransferase family. RimI subfamily. Monomer. Interacts with TsaD. Interacts with GroS/GroES.

It carries out the reaction N-terminal L-methionyl-L-alanyl-[protein] + acetyl-CoA = N-terminal N(alpha)-acetyl-L-methionyl-L-alanyl-[protein] + CoA + H(+). It catalyses the reaction N-terminal L-methionyl-L-seryl-[protein] + acetyl-CoA = N-terminal N(alpha)-acetyl-L-methionyl-L-seryl-[protein] + CoA + H(+). The catalysed reaction is N-terminal L-methionyl-L-valyl-[protein] + acetyl-CoA = N-terminal N(alpha)-acetyl-L-methionyl-L-valyl-[protein] + CoA + H(+). The enzyme catalyses N-terminal L-methionyl-L-threonyl-[protein] + acetyl-CoA = N-terminal N(alpha)-acetyl-L-methionyl-L-threonyl-[protein] + CoA + H(+). It carries out the reaction N-terminal L-methionyl-L-lysyl-[protein] + acetyl-CoA = N-terminal N(alpha)-acetyl-L-methionyl-L-lysyl-[protein] + CoA + H(+). It catalyses the reaction N-terminal L-methionyl-L-leucyl-[protein] + acetyl-CoA = N-terminal N(alpha)-acetyl-L-methionyl-L-leucyl-[protein] + CoA + H(+). The catalysed reaction is N-terminal L-methionyl-L-phenylalanyl-[protein] + acetyl-CoA = N-terminal N(alpha)-acetyl-L-methionyl-L-phenylalanyl-[protein] + CoA + H(+). The enzyme catalyses N-terminal L-methionyl-L-tyrosyl-[protein] + acetyl-CoA = N-terminal N(alpha)-acetyl-L-methionyl-L-tyrosyl-[protein] + CoA + H(+). It carries out the reaction N-terminal glycyl-[protein] + acetyl-CoA = N-terminal N(alpha)-acetylglycyl-[protein] + CoA + H(+). It catalyses the reaction N-terminal L-alanyl-[protein] + acetyl-CoA = N-terminal N(alpha)-acetyl-L-alanyl-[protein] + CoA + H(+). The catalysed reaction is N-terminal L-seryl-[protein] + acetyl-CoA = N-terminal N(alpha)-acetyl-L-seryl-[protein] + CoA + H(+). The enzyme catalyses N-terminal L-valyl-[protein] + acetyl-CoA = N-terminal N(alpha)-acetyl-L-valyl-[protein] + CoA + H(+). It carries out the reaction N-terminal L-cysteinyl-[protein] + acetyl-CoA = N-terminal N(alpha)-acetyl-L-cysteinyl-[protein] + CoA + H(+). It catalyses the reaction N-terminal L-threonyl-[protein] + acetyl-CoA = N-terminal N(alpha)-acetyl-L-threonyl-[protein] + CoA + H(+). In terms of biological role, N-alpha-acetyltransferase that specifically mediates the acetylation of N-terminal residues. Able to mediate acetylation of a wide variety of N-terminal residues, with preference for hydrophobic N-termini. Acetylates GroS/GroES and GroEL1. Able to acetylate the ribosomal protein bS18, but it is unclear whether it acetylates its N-terminal alanine residue. The chain is N-alpha-acetyltransferase RimI from Mycobacterium tuberculosis (strain ATCC 25618 / H37Rv).